Consider the following 711-residue polypeptide: L-type lectin-domain containing receptor kinase VIII.2 (711 aa).

Residues 1–30 (MLKLPPRFFSVYSTLIHILASFLCSSDVRG) form the signal peptide. Over 31-315 (DFPATRFDLG…NKLCKKSPAA (285 aa)) the chain is Extracellular. The legume-lectin like stretch occupies residues 35 to 260 (TRFDLGTLTL…IHSVDWWSFS (226 aa)). N-linked (GlcNAc...) asparagine glycosylation occurs at asparagine 57. The segment at 265–306 (ESSESPPPMPNSPPPSSPSSSITPSLSTVRRKTADPSSSCRN) is disordered. The segment covering 269–281 (SPPPMPNSPPPSS) has biased composition (pro residues). Over residues 282 to 291 (PSSSITPSLS) the composition is skewed to low complexity. Residues 316 to 336 (VAGVVTAGAFFLALFAGVIIW) traverse the membrane as a helical segment. Over 337 to 711 (VYSKKIKYTR…IFIVGKDRSV (375 aa)) the chain is Cytoplasmic. Residues 374–656 (FSSSRVIGNG…LVGEADVPEV (283 aa)) form the Protein kinase domain. ATP contacts are provided by residues 380–388 (IGNGAFGTV) and lysine 403. Aspartate 497 (proton acceptor) is an active-site residue.

This sequence in the C-terminal section; belongs to the protein kinase superfamily. Ser/Thr protein kinase family. In the N-terminal section; belongs to the leguminous lectin family.

The protein resides in the cell membrane. It catalyses the reaction L-seryl-[protein] + ATP = O-phospho-L-seryl-[protein] + ADP + H(+). The enzyme catalyses L-threonyl-[protein] + ATP = O-phospho-L-threonyl-[protein] + ADP + H(+). Functionally, involved in resistance response to the pathogenic oomycetes Phytophthora infestans and Phytophthora capsici. This chain is L-type lectin-domain containing receptor kinase VIII.2, found in Arabidopsis thaliana (Mouse-ear cress).